The primary structure comprises 55 residues: ATP synthase F(0) complex subunit 8 (55 aa).

A helical transmembrane segment spans residues 8 to 24 (PWFSIMVMTWLTLALLI). Residues 35–55 (NPPSKKPSLITKPTPWAWPWT) are disordered.

Belongs to the ATPase protein 8 family. As to quaternary structure, component of the ATP synthase complex composed at least of ATP5F1A/subunit alpha, ATP5F1B/subunit beta, ATP5MC1/subunit c (homooctomer), MT-ATP6/subunit a, MT-ATP8/subunit 8, ATP5ME/subunit e, ATP5MF/subunit f, ATP5MG/subunit g, ATP5MK/subunit k, ATP5MJ/subunit j, ATP5F1C/subunit gamma, ATP5F1D/subunit delta, ATP5F1E/subunit epsilon, ATP5PF/subunit F6, ATP5PB/subunit b, ATP5PD/subunit d, ATP5PO/subunit OSCP. ATP synthase complex consists of a soluble F(1) head domain (subunits alpha(3) and beta(3)) - the catalytic core - and a membrane F(0) domain - the membrane proton channel (subunits c, a, 8, e, f, g, k and j). These two domains are linked by a central stalk (subunits gamma, delta, and epsilon) rotating inside the F1 region and a stationary peripheral stalk (subunits F6, b, d, and OSCP).

The protein resides in the mitochondrion membrane. Functionally, subunit 8, of the mitochondrial membrane ATP synthase complex (F(1)F(0) ATP synthase or Complex V) that produces ATP from ADP in the presence of a proton gradient across the membrane which is generated by electron transport complexes of the respiratory chain. ATP synthase complex consist of a soluble F(1) head domain - the catalytic core - and a membrane F(1) domain - the membrane proton channel. These two domains are linked by a central stalk rotating inside the F(1) region and a stationary peripheral stalk. During catalysis, ATP synthesis in the catalytic domain of F(1) is coupled via a rotary mechanism of the central stalk subunits to proton translocation. In vivo, can only synthesize ATP although its ATP hydrolase activity can be activated artificially in vitro. Part of the complex F(0) domain. This is ATP synthase F(0) complex subunit 8 from Anas platyrhynchos (Mallard).